We begin with the raw amino-acid sequence, 443 residues long: CBL-interacting protein kinase 2 (443 aa).

Residues 13 to 267 form the Protein kinase domain; it reads YEMGKLLGQG…MDKIMENPWF (255 aa). Residues 19-27 and Lys42 each bind ATP; that span reads LGQGTFAKV. The active-site Proton acceptor is Asp135. The tract at residues 153-182 is activation loop; the sequence is DFGLSALADCKRQDGLLHTTCGTPAYVAPE. The NAF domain occupies 302–329; that stretch reads TLEKKPSNLNAFDIISLSTGLDLSGMFE. A PPI region spans residues 333 to 362; the sequence is KKESKFTSTSTASTIISKIEDIAKGLRLKL.

It belongs to the protein kinase superfamily. CAMK Ser/Thr protein kinase family. SNF1 subfamily. Mn(2+) is required as a cofactor.

The enzyme catalyses L-seryl-[protein] + ATP = O-phospho-L-seryl-[protein] + ADP + H(+). It catalyses the reaction L-threonyl-[protein] + ATP = O-phospho-L-threonyl-[protein] + ADP + H(+). Its function is as follows. CIPK serine-threonine protein kinases interact with CBL proteins. Binding of a CBL protein to the regulatory NAF domain of CIPK protein lead to the activation of the kinase in a calcium-dependent manner. The sequence is that of CBL-interacting protein kinase 2 (CIPK2) from Oryza sativa subsp. japonica (Rice).